The following is a 533-amino-acid chain: D-2-hydroxyglutarate dehydrogenase, mitochondrial (533 aa).

The transit peptide at 1–55 (MGLFQKCSRLSLRSSYMWSVCPQYSIAVTARETPDRALIVHWTQHRDVHNSRRLG) directs the protein to the mitochondrion. One can recognise an FAD-binding PCMH-type domain in the interval 107-286 (VQGSSDVLLR…TAVSILCPRK (180 aa)). (R)-2-hydroxyglutarate is bound by residues Arg397, Thr401, and Lys412. A (R)-lactate-binding site is contributed by Arg397. (R)-malate contacts are provided by Arg397, Thr401, and Lys412. Residues His445 and His452 each contribute to the Zn(2+) site. Asn454 contacts (R)-2-hydroxyglutarate. A Zn(2+)-binding site is contributed by Glu486. His487 is a (R)-2-hydroxyglutarate binding site. Position 487 (His487) interacts with (R)-lactate. His487 contacts (R)-malate.

It belongs to the FAD-binding oxidoreductase/transferase type 4 family. The cofactor is FAD.

Its subcellular location is the mitochondrion. It catalyses the reaction (R)-2-hydroxyglutarate + A = 2-oxoglutarate + AH2. The enzyme catalyses (R)-malate + A = oxaloacetate + AH2. Its function is as follows. Catalyzes the oxidation of D-2-hydroxyglutarate (D-2-HG) to alpha-ketoglutarate. Also catalyzes the oxidation of other D-2-hydroxyacids, such as D-malate (D-MAL) and D-lactate (D-LAC). Exhibits high activities towards D-2-HG and D-MAL but a very weak activity towards D-LAC. The polypeptide is D-2-hydroxyglutarate dehydrogenase, mitochondrial (d2hgdh) (Danio rerio (Zebrafish)).